Consider the following 101-residue polypeptide: Small ribosomal subunit protein uS14 (101 aa).

Residues 1–21 are disordered; that stretch reads MAKTSSVEKNNRRRKLADQYG.

It belongs to the universal ribosomal protein uS14 family. In terms of assembly, part of the 30S ribosomal subunit. Contacts proteins S3 and S10.

Functionally, binds 16S rRNA, required for the assembly of 30S particles and may also be responsible for determining the conformation of the 16S rRNA at the A site. In Mesorhizobium japonicum (strain LMG 29417 / CECT 9101 / MAFF 303099) (Mesorhizobium loti (strain MAFF 303099)), this protein is Small ribosomal subunit protein uS14.